Reading from the N-terminus, the 194-residue chain is Thymidine kinase (194 aa).

Residues 15–22 and 88–91 contribute to the ATP site; these read GSMFSGKS and DEVQ. The Proton acceptor role is filled by glutamate 89. 4 residues coordinate Zn(2+): cysteine 145, cysteine 148, cysteine 183, and histidine 186.

The protein belongs to the thymidine kinase family. In terms of assembly, homotetramer.

It localises to the cytoplasm. The catalysed reaction is thymidine + ATP = dTMP + ADP + H(+). The sequence is that of Thymidine kinase from Bacillus velezensis (strain DSM 23117 / BGSC 10A6 / LMG 26770 / FZB42) (Bacillus amyloliquefaciens subsp. plantarum).